The primary structure comprises 475 residues: Ribulose bisphosphate carboxylase large chain (475 aa).

At K14 the chain carries N6,N6,N6-trimethyllysine. Positions 123 and 173 each coordinate substrate. Residue K175 is the Proton acceptor of the active site. K177 lines the substrate pocket. Residues K201, D203, and E204 each contribute to the Mg(2+) site. An N6-carboxylysine modification is found at K201. H294 acts as the Proton acceptor in catalysis. Substrate-binding residues include R295, H327, and S379.

It belongs to the RuBisCO large chain family. Type I subfamily. In terms of assembly, heterohexadecamer of 8 large chains and 8 small chains; disulfide-linked. The disulfide link is formed within the large subunit homodimers. The cofactor is Mg(2+). The disulfide bond which can form in the large chain dimeric partners within the hexadecamer appears to be associated with oxidative stress and protein turnover.

The protein localises to the plastid. Its subcellular location is the chloroplast. It catalyses the reaction 2 (2R)-3-phosphoglycerate + 2 H(+) = D-ribulose 1,5-bisphosphate + CO2 + H2O. The catalysed reaction is D-ribulose 1,5-bisphosphate + O2 = 2-phosphoglycolate + (2R)-3-phosphoglycerate + 2 H(+). In terms of biological role, ruBisCO catalyzes two reactions: the carboxylation of D-ribulose 1,5-bisphosphate, the primary event in carbon dioxide fixation, as well as the oxidative fragmentation of the pentose substrate in the photorespiration process. Both reactions occur simultaneously and in competition at the same active site. The chain is Ribulose bisphosphate carboxylase large chain from Actinidia chinensis (Kiwi).